The following is a 285-amino-acid chain: Putative sugar uptake protein lmo0424 (285 aa).

9 helical membrane-spanning segments follow: residues 2-21 (SIYLIALLPVLGWGFMPIIA), 31-50 (QLLGTSISALLFALILFWIL), 55-77 (TVLSFIVSFISGIFWSFGQLLQF), 111-133 (WQTVTAVIIGVVAVILILIGVVM), 146-168 (SVSFHVYGIVILSSFFLTLYVVT), 172-194 (FDVTGFSIILPQAIGMLTCAIGI), 207-229 (VTFNLMTGLSWSIANLGMFLATA), 233-255 (VATSFSISQACVIVATIGGILIF), and 262-284 (LEWTFILSGILLIMVGVVFLSLL).

Belongs to the GRP transporter (TC 2.A.7.5) family.

It localises to the cell membrane. The chain is Putative sugar uptake protein lmo0424 from Listeria monocytogenes serovar 1/2a (strain ATCC BAA-679 / EGD-e).